A 262-amino-acid polypeptide reads, in one-letter code: Phosphate import ATP-binding protein PstB (262 aa).

The ABC transporter domain maps to I16–I257. An ATP-binding site is contributed by G48–S55.

It belongs to the ABC transporter superfamily. Phosphate importer (TC 3.A.1.7) family. The complex is composed of two ATP-binding proteins (PstB), two transmembrane proteins (PstC and PstA) and a solute-binding protein (PstS).

It localises to the cell inner membrane. It carries out the reaction phosphate(out) + ATP + H2O = ADP + 2 phosphate(in) + H(+). Functionally, part of the ABC transporter complex PstSACB involved in phosphate import. Responsible for energy coupling to the transport system. This chain is Phosphate import ATP-binding protein PstB, found in Cupriavidus metallidurans (strain ATCC 43123 / DSM 2839 / NBRC 102507 / CH34) (Ralstonia metallidurans).